A 523-amino-acid polypeptide reads, in one-letter code: GMP synthase [glutamine-hydrolyzing] (523 aa).

The region spanning 8–205 (KILILDFGSQ…VVKICGCERN (198 aa)) is the Glutamine amidotransferase type-1 domain. The Nucleophile role is filled by C85. Residues H179 and E181 contribute to the active site. The GMPS ATP-PPase domain maps to 206-398 (WTPENIIEDA…LGLPAEMLNR (193 aa)). Residue 233–239 (SGGVDSS) participates in ATP binding.

In terms of assembly, homodimer.

The catalysed reaction is XMP + L-glutamine + ATP + H2O = GMP + L-glutamate + AMP + diphosphate + 2 H(+). The protein operates within purine metabolism; GMP biosynthesis; GMP from XMP (L-Gln route): step 1/1. Its function is as follows. Catalyzes the synthesis of GMP from XMP. The polypeptide is GMP synthase [glutamine-hydrolyzing] (Pasteurella multocida (strain Pm70)).